A 146-amino-acid polypeptide reads, in one-letter code: Probable calcium-binding protein CML40 (146 aa).

One can recognise an EF-hand 1 domain in the interval 7 to 42 (NKRDEYQRVFSCFDKSHQGKVSVSTIERCVDAIKSG). The tract at residues 44-65 (RAVVDQEDTTNPNPEESTDDKS) is disordered. The EF-hand 2 domain occupies 116 to 146 (KSLKDCEVMISQFDINRDGIINFDEFRAMMQ). Ca(2+)-binding residues include aspartate 129, asparagine 131, aspartate 133, and glutamate 140.

In terms of biological role, potential calcium sensor. The sequence is that of Probable calcium-binding protein CML40 (CML40) from Arabidopsis thaliana (Mouse-ear cress).